The primary structure comprises 930 residues: Eisosome protein 1 (930 aa).

Disordered regions lie at residues 1–34 (MSLI…DGKP), 98–143 (TAVS…APKK), 516–544 (DNEI…EEFD), and 637–930 (NNKS…KEVF). Composition is skewed to low complexity over residues 13–27 (ASST…SSAV) and 98–129 (TAVS…AVKA). Basic and acidic residues-rich tracts occupy residues 523-542 (AAKH…HKEE) and 676-691 (NSDE…KSSE). Positions 703 to 715 (PAKASSPYPAKPS) are enriched in low complexity. Residues 721–731 (LPKDFKPEVKP) show a composition bias toward basic and acidic residues. 2 stretches are compositionally biased toward low complexity: residues 740–755 (PQQG…SAKS) and 781–804 (PAAA…KAAA). Composition is skewed to polar residues over residues 849-866 (NATT…NSGI) and 883-894 (SGHSNHTRTSVY). Positions 898 to 908 (DNSDDEDELPD) are enriched in acidic residues. Positions 919–930 (ADKKGSLFKEVF) are enriched in basic and acidic residues.

The protein belongs to the EIS1 family.

It is found in the cytoplasmic granule. Its subcellular location is the cell membrane. Its function is as follows. Required for normal formation of eisosomes, large cytoplasmic protein assemblies that localize to specialized domains on plasma membrane and mark the site of endocytosis. This chain is Eisosome protein 1 (EIS1), found in Lachancea thermotolerans (strain ATCC 56472 / CBS 6340 / NRRL Y-8284) (Yeast).